Consider the following 64-residue polypeptide: Translation machinery-associated protein 7 homolog (64 aa).

A disordered region spans residues 1–64 (MSGREGGKKK…QGGIKKSGKK (64 aa)). Over residues 27-44 (VAFKQKQKEQQKALDAAK) the composition is skewed to basic and acidic residues.

This sequence belongs to the TMA7 family.

This is Translation machinery-associated protein 7 homolog from Anopheles funestus (African malaria mosquito).